A 449-amino-acid polypeptide reads, in one-letter code: Jacalin-related lectin 20 (449 aa).

Disordered regions lie at residues 1-20 and 294-314; these read MAQR…DDGA and APPI…GDGG. Position 2 is an N-acetylalanine (Ala2). Jacalin-type lectin domains lie at 2-144, 147-294, and 303-446; these read AQRL…YFTP, PIKQ…HFGA, and TEKL…TVAP.

Belongs to the jacalin lectin family.

The protein is Jacalin-related lectin 20 (JAL20) of Arabidopsis thaliana (Mouse-ear cress).